A 540-amino-acid chain; its full sequence is Chaperonin GroEL (540 aa).

ATP-binding positions include 29-32 (TLGP), 86-90 (DGTTT), G413, 476-478 (NAA), and D492.

It belongs to the chaperonin (HSP60) family. As to quaternary structure, forms a cylinder of 14 subunits composed of two heptameric rings stacked back-to-back. Interacts with the co-chaperonin GroES.

Its subcellular location is the cytoplasm. It catalyses the reaction ATP + H2O + a folded polypeptide = ADP + phosphate + an unfolded polypeptide.. In terms of biological role, together with its co-chaperonin GroES, plays an essential role in assisting protein folding. The GroEL-GroES system forms a nano-cage that allows encapsulation of the non-native substrate proteins and provides a physical environment optimized to promote and accelerate protein folding. The protein is Chaperonin GroEL of Streptococcus agalactiae serotype V (strain ATCC BAA-611 / 2603 V/R).